A 463-amino-acid polypeptide reads, in one-letter code: Major capsid protein (463 aa).

It belongs to the NCLDV major capsid protein family. As to quaternary structure, homotrimer.

It localises to the virion. In terms of biological role, major capsid protein that self assembles to form an icosahedral capsid. Represents around 50% of the total virion protein mass. The polypeptide is Major capsid protein (MCP) (Rana tigrina ranavirus).